Here is a 189-residue protein sequence, read N- to C-terminus: Elongation factor P (189 aa).

Belongs to the elongation factor P family.

The protein resides in the cytoplasm. The protein operates within protein biosynthesis; polypeptide chain elongation. Involved in peptide bond synthesis. Stimulates efficient translation and peptide-bond synthesis on native or reconstituted 70S ribosomes in vitro. Probably functions indirectly by altering the affinity of the ribosome for aminoacyl-tRNA, thus increasing their reactivity as acceptors for peptidyl transferase. This chain is Elongation factor P, found in Sinorhizobium medicae (strain WSM419) (Ensifer medicae).